We begin with the raw amino-acid sequence, 379 residues long: Queuine tRNA-ribosyltransferase (379 aa).

D94 (proton acceptor) is an active-site residue. Substrate is bound by residues 94-98 (DSGGF), D148, Q191, and G218. Positions 249-255 (GVGSPDS) are RNA binding. D268 acts as the Nucleophile in catalysis. The tract at residues 273–277 (TRIAR) is RNA binding; important for wobble base 34 recognition. The Zn(2+) site is built by C306, C308, C311, and H337.

It belongs to the queuine tRNA-ribosyltransferase family. As to quaternary structure, homodimer. Within each dimer, one monomer is responsible for RNA recognition and catalysis, while the other monomer binds to the replacement base PreQ1. Zn(2+) serves as cofactor.

It catalyses the reaction 7-aminomethyl-7-carbaguanine + guanosine(34) in tRNA = 7-aminomethyl-7-carbaguanosine(34) in tRNA + guanine. It functions in the pathway tRNA modification; tRNA-queuosine biosynthesis. Functionally, catalyzes the base-exchange of a guanine (G) residue with the queuine precursor 7-aminomethyl-7-deazaguanine (PreQ1) at position 34 (anticodon wobble position) in tRNAs with GU(N) anticodons (tRNA-Asp, -Asn, -His and -Tyr). Catalysis occurs through a double-displacement mechanism. The nucleophile active site attacks the C1' of nucleotide 34 to detach the guanine base from the RNA, forming a covalent enzyme-RNA intermediate. The proton acceptor active site deprotonates the incoming PreQ1, allowing a nucleophilic attack on the C1' of the ribose to form the product. After dissociation, two additional enzymatic reactions on the tRNA convert PreQ1 to queuine (Q), resulting in the hypermodified nucleoside queuosine (7-(((4,5-cis-dihydroxy-2-cyclopenten-1-yl)amino)methyl)-7-deazaguanosine). The chain is Queuine tRNA-ribosyltransferase from Bacillus cereus (strain G9842).